The primary structure comprises 239 residues: MRQSGRKSNQLRPISLELSPLINAEGSCLIKIGNTHVMCSATCETTVPPFLRGQNQGWITAEYGMLPGSTSQRIKREAALGKQGGRTQEIQRLIGRAMRCVIDVRKLGERQIIIDCDVINADGGTRTAAITGSYVALHLAIRSLMKKRVLKVNPLISQIAAISCGIYKGEAILDLDYLEDSDADVDSNFVFAGNGNLIEVQGTAEKNPFSEEQFLAMLKLAKGGAAELFKLQNQVLLGS.

Phosphate contacts are provided by residues Arg86 and 124–126; that span reads GTR.

This sequence belongs to the RNase PH family. Homohexameric ring arranged as a trimer of dimers.

The catalysed reaction is tRNA(n+1) + phosphate = tRNA(n) + a ribonucleoside 5'-diphosphate. Its function is as follows. Phosphorolytic 3'-5' exoribonuclease that plays an important role in tRNA 3'-end maturation. Removes nucleotide residues following the 3'-CCA terminus of tRNAs; can also add nucleotides to the ends of RNA molecules by using nucleoside diphosphates as substrates, but this may not be physiologically important. Probably plays a role in initiation of 16S rRNA degradation (leading to ribosome degradation) during starvation. In Rickettsia africae (strain ESF-5), this protein is Ribonuclease PH.